A 287-amino-acid polypeptide reads, in one-letter code: O-ureido-serine racemase (287 aa).

Residue Asn-20 participates in substrate binding. Cys-81 acts as the Proton donor in catalysis. Substrate contacts are provided by residues 82-83 (GN), Asn-167, Asn-200, and 218-219 (EY). Catalysis depends on Cys-227, which acts as the Proton acceptor. Residue 228-229 (GS) coordinates substrate.

Belongs to the diaminopimelate epimerase family. As to quaternary structure, monomer.

It localises to the cytoplasm. The enzyme catalyses O-ureido-L-serine = O-ureido-D-serine. Its activity is regulated as follows. Inhibited by thiol-inactivating reagents such as iodoacetamide and Hg(2+) ions. In terms of biological role, involved in the biosynthesis of the antibiotic D-cycloserine (DCS), a cyclic structural analog of D-alanine, used as an antitubercular agent. Catalyzes the stereoinversion of O-ureido-L-serine to O-ureido-D-serine. This chain is O-ureido-serine racemase, found in Streptomyces lavendulae.